Consider the following 412-residue polypeptide: Acetate kinase (412 aa).

N10 contributes to the Mg(2+) binding site. K17 contacts ATP. The tract at residues 40 to 61 (ETSRLAHTPSAGGGAEPRERTG) is disordered. A substrate-binding site is contributed by R95. D152 serves as the catalytic Proton donor/acceptor. ATP is bound by residues 212–216 (HLGNG), 286–288 (DMR), and 334–338 (GVGEN). Position 388 (E388) interacts with Mg(2+).

Belongs to the acetokinase family. As to quaternary structure, homodimer. The cofactor is Mg(2+). It depends on Mn(2+) as a cofactor.

It is found in the cytoplasm. It catalyses the reaction acetate + ATP = acetyl phosphate + ADP. It functions in the pathway metabolic intermediate biosynthesis; acetyl-CoA biosynthesis; acetyl-CoA from acetate: step 1/2. Catalyzes the formation of acetyl phosphate from acetate and ATP. Can also catalyze the reverse reaction. This chain is Acetate kinase, found in Streptomyces griseus subsp. griseus (strain JCM 4626 / CBS 651.72 / NBRC 13350 / KCC S-0626 / ISP 5235).